The following is a 480-amino-acid chain: MTNDTQYKRHKTVLKEESRRTIQINKSWGGRFNEPTDEFVKIFGASIFFDKILAPYDIQGSIAHATMLQEVGLLTENEKNKIIKGLERILSEVKTGEFKWSITLEDIHMNIEARLVKMIGDTGKKLHTGRSRNDQIVTDIRLYLRDQVDDITNEIKRLQLVLADLAEKETNTIMPGFTHLQAAQPISFGHHMMAYFEMLARDVERLFDCRKRINSMPLGSAALAGTTYSIKRTRTAELLGFERICLNSLDGVSDRDFVIEFLSTASIIMMHLSRFSEELILWSSAQFNFIELPDSFCTGSSIMPQKKNPDVPELVRGKTGRVYGNLTSLLTIMKSQPLAYNKDNQEDKEPLFDTVDTLKACLRVFADMIPTIQIKRDNMYNSTKQGYTTATDLADYLVNKGLPFRDAHKVVGKSVAYGIEHQKDLSELSLEELQAFDSRIENDVFEILSLEGSLNARNHLGATSPNQVKQAIKIARKTLK.

Belongs to the lyase 1 family. Argininosuccinate lyase subfamily.

Its subcellular location is the cytoplasm. The catalysed reaction is 2-(N(omega)-L-arginino)succinate = fumarate + L-arginine. It participates in amino-acid biosynthesis; L-arginine biosynthesis; L-arginine from L-ornithine and carbamoyl phosphate: step 3/3. This is Argininosuccinate lyase from Ruthia magnifica subsp. Calyptogena magnifica.